Here is a 556-residue protein sequence, read N- to C-terminus: Oxygen-dependent choline dehydrogenase (556 aa).

An FAD-binding site is contributed by 4-33; it reads DYIIIGAGSAGNVLATRLTEDPNTTVLLLE. Residue H473 is the Proton acceptor of the active site.

Belongs to the GMC oxidoreductase family. Requires FAD as cofactor.

The catalysed reaction is choline + A = betaine aldehyde + AH2. It carries out the reaction betaine aldehyde + NAD(+) + H2O = glycine betaine + NADH + 2 H(+). The protein operates within amine and polyamine biosynthesis; betaine biosynthesis via choline pathway; betaine aldehyde from choline (cytochrome c reductase route): step 1/1. Its function is as follows. Involved in the biosynthesis of the osmoprotectant glycine betaine. Catalyzes the oxidation of choline to betaine aldehyde and betaine aldehyde to glycine betaine at the same rate. The chain is Oxygen-dependent choline dehydrogenase from Escherichia coli O17:K52:H18 (strain UMN026 / ExPEC).